We begin with the raw amino-acid sequence, 84 residues long: Putative regulatory protein Hore_09800 (84 aa).

Belongs to the RemA family.

This is Putative regulatory protein Hore_09800 from Halothermothrix orenii (strain H 168 / OCM 544 / DSM 9562).